The chain runs to 529 residues: Inosine-5'-monophosphate dehydrogenase (529 aa).

CBS domains lie at 129-185 (MVTD…SKQV) and 189-246 (MTKT…PLAT). NAD(+) is bound by residues Asp-283 and 334-336 (GVG). K(+) contacts are provided by Gly-336 and Gly-338. Ser-339 provides a ligand contact to IMP. Cys-341 lines the K(+) pocket. Cys-341 serves as the catalytic Thioimidate intermediate. Residues 374–376 (DGG), 397–398 (GS), and 421–425 (YRGMG) each bind IMP. The active-site Proton acceptor is the Arg-443. Position 458 (Glu-458) interacts with IMP. Positions 511, 512, and 513 each coordinate K(+).

Belongs to the IMPDH/GMPR family. In terms of assembly, homotetramer. K(+) is required as a cofactor.

It carries out the reaction IMP + NAD(+) + H2O = XMP + NADH + H(+). The protein operates within purine metabolism; XMP biosynthesis via de novo pathway; XMP from IMP: step 1/1. Its activity is regulated as follows. Mycophenolic acid (MPA) is a non-competitive inhibitor that prevents formation of the closed enzyme conformation by binding to the same site as the amobile flap. In contrast, mizoribine monophosphate (MZP) is a competitive inhibitor that induces the closed conformation. MPA is a potent inhibitor of mammalian IMPDHs but a poor inhibitor of the bacterial enzymes. MZP is a more potent inhibitor of bacterial IMPDH. Catalyzes the conversion of inosine 5'-phosphate (IMP) to xanthosine 5'-phosphate (XMP), the first committed and rate-limiting step in the de novo synthesis of guanine nucleotides, and therefore plays an important role in the regulation of cell growth. The chain is Inosine-5'-monophosphate dehydrogenase from Mycobacterium leprae (strain TN).